Consider the following 724-residue polypeptide: Peroxidase mlt-7 (724 aa).

The N-terminal stretch at 1 to 24 (MRRLHRNLSLLFLICILNEYRIES) is a signal peptide. N-linked (GlcNAc...) asparagine glycosylation is present at N7. Positions 25–178 (QTLSPPITDR…GCVPQLSDVG (154 aa)) are excised as a propeptide. In terms of domain architecture, ShKT spans 42-76 (CCDHHEWCRFWASIGECNANKDWMTENCQLACGTC). Residues C181 and C198 are joined by a disulfide bond. Residue N233 is glycosylated (N-linked (GlcNAc...) asparagine). H271 acts as the Proton acceptor in catalysis. D272 provides a ligand contact to Ca(2+). C284 and C294 are joined by a disulfide. Ca(2+) is bound by residues T335, Y337, D339, and S341. Residue H493 participates in heme b binding. 2 N-linked (GlcNAc...) asparagine glycosylation sites follow: N509 and N617. 2 disulfide bridges follow: C588–C645 and C686–C710.

The protein belongs to the peroxidase family. Requires heme b as cofactor. In terms of tissue distribution, expressed in the hypodermal cells, specifically the head and seam/body.

It carries out the reaction 2 a phenolic donor + H2O2 = 2 a phenolic radical donor + 2 H2O. Functionally, plays an essential role in cuticle biogenesis. Required in combination with bli-3 for correct formation of cross-links in cuticle collagens. The chain is Peroxidase mlt-7 from Caenorhabditis elegans.